The primary structure comprises 146 residues: Peptidyl-lysine N-acetyltransferase YiaC (146 aa).

The N-acetyltransferase domain occupies 1–143; the sequence is MIREAQRSEL…PTWIMSWPVV (143 aa).

It belongs to the acetyltransferase family.

It carries out the reaction L-lysyl-[protein] + acetyl-CoA = N(6)-acetyl-L-lysyl-[protein] + CoA + H(+). In terms of biological role, N-epsilon-lysine acetyltransferase that catalyzes acetylation of a large number of proteins. Overexpression inhibits motility. This chain is Peptidyl-lysine N-acetyltransferase YiaC (yiaC), found in Escherichia coli (strain K12).